Reading from the N-terminus, the 209-residue chain is Thiamine-phosphate synthase (209 aa).

4-amino-2-methyl-5-(diphosphooxymethyl)pyrimidine-binding positions include 36–40 (QYRDK) and asparagine 68. Mg(2+) is bound by residues aspartate 69 and aspartate 87. Threonine 106 serves as a coordination point for 4-amino-2-methyl-5-(diphosphooxymethyl)pyrimidine. A 2-[(2R,5Z)-2-carboxy-4-methylthiazol-5(2H)-ylidene]ethyl phosphate-binding site is contributed by 133–135 (SST). Lysine 136 contacts 4-amino-2-methyl-5-(diphosphooxymethyl)pyrimidine. Residue glycine 163 coordinates 2-[(2R,5Z)-2-carboxy-4-methylthiazol-5(2H)-ylidene]ethyl phosphate.

This sequence belongs to the thiamine-phosphate synthase family. The cofactor is Mg(2+).

The catalysed reaction is 2-[(2R,5Z)-2-carboxy-4-methylthiazol-5(2H)-ylidene]ethyl phosphate + 4-amino-2-methyl-5-(diphosphooxymethyl)pyrimidine + 2 H(+) = thiamine phosphate + CO2 + diphosphate. The enzyme catalyses 2-(2-carboxy-4-methylthiazol-5-yl)ethyl phosphate + 4-amino-2-methyl-5-(diphosphooxymethyl)pyrimidine + 2 H(+) = thiamine phosphate + CO2 + diphosphate. It catalyses the reaction 4-methyl-5-(2-phosphooxyethyl)-thiazole + 4-amino-2-methyl-5-(diphosphooxymethyl)pyrimidine + H(+) = thiamine phosphate + diphosphate. It functions in the pathway cofactor biosynthesis; thiamine diphosphate biosynthesis; thiamine phosphate from 4-amino-2-methyl-5-diphosphomethylpyrimidine and 4-methyl-5-(2-phosphoethyl)-thiazole: step 1/1. Its function is as follows. Condenses 4-methyl-5-(beta-hydroxyethyl)thiazole monophosphate (THZ-P) and 2-methyl-4-amino-5-hydroxymethyl pyrimidine pyrophosphate (HMP-PP) to form thiamine monophosphate (TMP). The polypeptide is Thiamine-phosphate synthase (Pseudomonas aeruginosa (strain UCBPP-PA14)).